The chain runs to 298 residues: Small ribosomal subunit biogenesis GTPase RsgA (298 aa).

A CP-type G domain is found at 67–228 (TNELIRPPIC…VADTPGFSSL (162 aa)). 116 to 119 (TKMD) is a GTP binding site. The residue at position 166 (T166) is a Phosphothreonine. GTP is bound at residue 171–179 (GQSGVGKSS). Zn(2+)-binding residues include C252, C257, H259, and C265.

This sequence belongs to the TRAFAC class YlqF/YawG GTPase family. RsgA subfamily. In terms of assembly, monomer, but able to form dimers. Associates with 30S ribosomal subunit; a phospho-mimetic mutation increases association. Probably binds 16S rRNA. The cofactor is Zn(2+). Post-translationally, in vitro phosphorylated mostly on Thr (with lower signal on Ser) by PrkC in the presence of poly-L-Lys or myelin basic protein, dephosphorylated by PrpC. Most in vitro phosphorylation occurs on Thr-166, in vivo phosphorylation has not been detected, but it might vary during the cell cycle.

The protein resides in the cytoplasm. Its function is as follows. One of several proteins that assist in the late maturation steps of the functional core of the 30S ribosomal subunit. Helps release RbfA from mature subunits. May play a role in the assembly of ribosomal proteins into the subunit. Circularly permuted GTPase with a low level of activity and slow catalytic turnover, does not act on ATP. GTPase activity is stimulated by the presence of 30S or 70S ribosomes, phosphorylation increases stimulation. Depletion results in increased sensitivity to protein synthesis inhibitors that block the peptide channel or peptidyl transferase center on the ribosome, suggesting this protein functions in conjunction with the ribosome in vivo. Decreasing levels of protein lead to an increase in free 30S and 50S ribosomal subunits and a decrease in assembled 70S ribosomes. Suggested to serve as a specific transcription factor for proteins involved in late stages of peptidoglycan synthesis. The sequence is that of Small ribosomal subunit biogenesis GTPase RsgA from Bacillus subtilis (strain 168).